Reading from the N-terminus, the 277-residue chain is Ribosomal RNA small subunit methyltransferase A (277 aa).

N24, L26, G51, E72, D96, and N123 together coordinate S-adenosyl-L-methionine.

It belongs to the class I-like SAM-binding methyltransferase superfamily. rRNA adenine N(6)-methyltransferase family. RsmA subfamily.

The protein resides in the cytoplasm. It carries out the reaction adenosine(1518)/adenosine(1519) in 16S rRNA + 4 S-adenosyl-L-methionine = N(6)-dimethyladenosine(1518)/N(6)-dimethyladenosine(1519) in 16S rRNA + 4 S-adenosyl-L-homocysteine + 4 H(+). In terms of biological role, specifically dimethylates two adjacent adenosines (A1518 and A1519) in the loop of a conserved hairpin near the 3'-end of 16S rRNA in the 30S particle. May play a critical role in biogenesis of 30S subunits. The sequence is that of Ribosomal RNA small subunit methyltransferase A from Ureaplasma parvum serovar 3 (strain ATCC 27815 / 27 / NCTC 11736).